Consider the following 185-residue polypeptide: Ribosome-recycling factor (185 aa).

This sequence belongs to the RRF family.

The protein resides in the cytoplasm. In terms of biological role, responsible for the release of ribosomes from messenger RNA at the termination of protein biosynthesis. May increase the efficiency of translation by recycling ribosomes from one round of translation to another. In Mycolicibacterium vanbaalenii (strain DSM 7251 / JCM 13017 / BCRC 16820 / KCTC 9966 / NRRL B-24157 / PYR-1) (Mycobacterium vanbaalenii), this protein is Ribosome-recycling factor.